Reading from the N-terminus, the 560-residue chain is NRAMP-like transporter smf-3 (560 aa).

Residues 1–43 (MEGEMKCPIEEIREKPEMRKAQQTYEVQVEVEDTPDTTFSWRK) lie on the Cytoplasmic side of the membrane. A helical membrane pass occupies residues 44–64 (LWAFTGPGFLMSIAYLDPGNI). The Extracellular portion of the chain corresponds to 65–71 (ESDLQAG). A helical transmembrane segment spans residues 72–92 (AISYFKLIWVLLVAHIMGLLL). Residues 93 to 120 (QRLAARLGVVSGKHMAEIAFSYYPKIPR) lie on the Cytoplasmic side of the membrane. The helical transmembrane segment at 121–141 (LVLWMLVESAIVGSDMQEVIG) threads the bilayer. Topologically, residues 142-152 (TAISFYLLSNG) are extracellular. Residues 153–173 (VIPLWAGVLITICDTFTFLFL) traverse the membrane as a helical segment. Over 174–182 (EKYGVRKFE) the chain is Cytoplasmic. A helical membrane pass occupies residues 183 to 203 (AFFCFLITCMAITFGYEFGVS). Over 204–229 (APDAGKMFSGMFVPWCNGCDNNMVMQ) the chain is Extracellular. Residues 230 to 250 (GVAIIGAVIMPHNFYLHSALV) traverse the membrane as a helical segment. The Cytoplasmic segment spans residues 251–268 (KSRRVDRRRAEKVTEANK). Residues 269–289 (YFFIESAFALFVSFIINTLVI) form a helical membrane-spanning segment. Residues 290–339 (SVFAQGMYGKTNQDIRDTCYNNTHNGMPDFYKVEFPANNDAAQSDIYHAG) lie on the Extracellular side of the membrane. N-linked (GlcNAc...) asparagine glycosylation occurs at asparagine 310. Residues 340-360 (IFLGCTFGIFALYVWAVGILA) traverse the membrane as a helical segment. Residues 361-390 (AGQSSTMTGTYAGQFAMEGFIQIKLPQWKR) lie on the Cytoplasmic side of the membrane. The chain crosses the membrane as a helical span at residues 391 to 411 (ILITRSLAILPTLAVVIFSGG). Residues 412–420 (IDNISSLND) lie on the Extracellular side of the membrane. A glycan (N-linked (GlcNAc...) asparagine) is linked at asparagine 414. A helical membrane pass occupies residues 421 to 441 (FLNCLQLIQLPFALIPVLTFV). Residues 442–458 (SDRNIMHEYKLASVSKV) are Cytoplasmic-facing. The chain crosses the membrane as a helical span at residues 459–479 (VSIVISLIILFINFYFLYSWI). Residues 480 to 486 (GSTFGYN) lie on the Extracellular side of the membrane. The chain crosses the membrane as a helical span at residues 487 to 507 (AVSIPITIFCAIFYIIFIAYL). Residues 508 to 560 (TYYCLVAMEFISPIQTKWLAEPIYHDFDAPWLEDSENPSTKNTISDDELSMRY) lie on the Cytoplasmic side of the membrane.

This sequence belongs to the NRAMP family. As to expression, expressed in dopaminergic neurons (at protein level). Expressed in intestine with a weaker expression in the most proximal and distal regions. Weakly expressed in the hyp1-6, hyp7 and hyp8-12 hypodermis and in head and tail neurons.

Its subcellular location is the apical cell membrane. The protein localises to the cytoplasmic vesicle membrane. Its function is as follows. Probable divalent metal ion transporter which regulates the uptake of several heavy metals such as Mn(2+), Al(3+) and iron. Plays a role in modulating Al(3+)-induced dopamine (DA) neuron degeneration through the intracellular sequestration of Al(3+). The chain is NRAMP-like transporter smf-3 from Caenorhabditis elegans.